The primary structure comprises 255 residues: Proteasome subunit alpha (255 aa).

The tract at residues 228–255 (LLASPAGTSGPTGEPGPAGTAATDGGDL) is disordered. Low complexity predominate over residues 232–255 (PAGTSGPTGEPGPAGTAATDGGDL).

It belongs to the peptidase T1A family. In terms of assembly, the 20S proteasome core is composed of 14 alpha and 14 beta subunits that assemble into four stacked heptameric rings, resulting in a barrel-shaped structure. The two inner rings, each composed of seven catalytic beta subunits, are sandwiched by two outer rings, each composed of seven alpha subunits. The catalytic chamber with the active sites is on the inside of the barrel. Has a gated structure, the ends of the cylinder being occluded by the N-termini of the alpha-subunits. Is capped by the proteasome-associated ATPase, ARC.

The protein resides in the cytoplasm. It functions in the pathway protein degradation; proteasomal Pup-dependent pathway. The formation of the proteasomal ATPase ARC-20S proteasome complex, likely via the docking of the C-termini of ARC into the intersubunit pockets in the alpha-rings, may trigger opening of the gate for substrate entry. Interconversion between the open-gate and close-gate conformations leads to a dynamic regulation of the 20S proteasome proteolysis activity. Component of the proteasome core, a large protease complex with broad specificity involved in protein degradation. This Sanguibacter keddieii (strain ATCC 51767 / DSM 10542 / NCFB 3025 / ST-74) protein is Proteasome subunit alpha.